We begin with the raw amino-acid sequence, 344 residues long: UDP-glycosyltransferase 73C4 (344 aa).

UDP-alpha-D-glucose-binding positions include Ser145, 202-203 (WA), 220-228 (HCGWNSSLE), and 242-245 (FAEQ).

Belongs to the UDP-glycosyltransferase family. Expressed in flowers and fruits.

The protein resides in the cytoplasm. It is found in the nucleus. Probable glucosyltransferase that cannot glycosylate abscisic acid (ABA) and auxin (IAA). The protein is UDP-glycosyltransferase 73C4 of Solanum lycopersicum (Tomato).